A 272-amino-acid polypeptide reads, in one-letter code: Tryptophan synthase alpha chain (272 aa).

Catalysis depends on proton acceptor residues Glu49 and Asp60.

Belongs to the TrpA family. In terms of assembly, tetramer of two alpha and two beta chains.

It carries out the reaction (1S,2R)-1-C-(indol-3-yl)glycerol 3-phosphate + L-serine = D-glyceraldehyde 3-phosphate + L-tryptophan + H2O. The protein operates within amino-acid biosynthesis; L-tryptophan biosynthesis; L-tryptophan from chorismate: step 5/5. In terms of biological role, the alpha subunit is responsible for the aldol cleavage of indoleglycerol phosphate to indole and glyceraldehyde 3-phosphate. This Hydrogenovibrio crunogenus (strain DSM 25203 / XCL-2) (Thiomicrospira crunogena) protein is Tryptophan synthase alpha chain.